The chain runs to 910 residues: MPLRLDIKRKLAQRSERVKSVDLHPTEPWILSSLYSGSVCIWNYQTQTMVKSFEVTELPVRSSKFIARKQWIVAGADDMFIRVYNYNTMDKVKVFEAHTDYIRCVAVHPTQPFVLSSSDDMLIKLWDWDKGWMCTQIFEGHSHYVMQVTFNPKDTNTFASASLDRTVKVWSLGSPDPNFTLDGHSKGVNCVDYFTGGDRPYLITGSDDQTAKVWDYQTKSCVQTLEGHAHNVSAVCFHPELPITLTGSEDGTVRLWHSTTYRLENTLNYGLERVWALGYMKGSRRVVIGYDEGTIMIKIGREVPVASMDSSGKIIWSKHNEIQTVNIKTIGADNEIADGERLPLAVKELGTCDLYPQSLRHNPNGRFVVVCGDGEYIIYTALAWRNRSFGSALEFVWSVDGEYAVRESTSRIKIYSKNFQERKSIRPPFSAERIFGGVLLAMCTNDFICFHDWAEGRMIRRIDVNVKNLYWADSGDLVTIASDTSFYILKYNRDVVSSHLDGGGSVGEEGVEDAFELLHEINERIRTGLWVGDCFIYNNSSSRLNYCVGGEVTTLFHLDRQMYLLGYLANQSRVYLIDKQFNVVGYTLLLTMIEYKTLVMRGDFDRANALLPSIPKEQHDSVARFLESQGMLEEALEIATDSNYRFDLAVQLGRLEVAKAIAIEAQSESKWRQLGELAMSTGKLDMAEECLLHAMDLSGLLLLYSSLGDAEGLTKLTSMAKEQGKNNVAFLCFFMLGKLEECLQLLIESNRIPEAALMSRSYLPSKVPEIVTLWKKDLQKVNPKAAESLADPDEYPNLFEDWQIALNVEANVAPKRGIYPPAEEYIIHAERPNETLVEAFKSMHIHLEEVLPDENGDDTHEAIEENGVEESQEDAVEVDVEADGSTDGAVLVNGNDTEEQWGTNNEESSA.

WD repeat units follow at residues 13 to 52 (QRSERVKSVDLHPTEPWILSSLYSGSVCIWNYQTQTMVKS), 55 to 94 (VTELPVRSSKFIARKQWIVAGADDMFIRVYNYNTMDKVKV), 97 to 136 (AHTDYIRCVAVHPTQPFVLSSSDDMLIKLWDWDKGWMCTQ), 140 to 180 (GHSH…PNFT), 183 to 224 (GHSK…CVQT), 227 to 266 (GHAHNVSAVCFHPELPITLTGSEDGTVRLWHSTTYRLENT), 269 to 309 (YGLE…ASMD), 351 to 393 (TCDL…GSAL), and 461 to 501 (RIDV…SHLD). Positions 882–910 (ADGSTDGAVLVNGNDTEEQWGTNNEESSA) are disordered. The segment covering 900-910 (QWGTNNEESSA) has biased composition (polar residues).

The protein belongs to the WD repeat COPB2 family. In terms of assembly, oligomeric complex that consists of at least the alpha, beta, beta', gamma, delta, epsilon and zeta subunits.

The protein resides in the cytoplasm. The protein localises to the golgi apparatus membrane. It localises to the cytoplasmic vesicle. It is found in the COPI-coated vesicle membrane. Its function is as follows. The coatomer is a cytosolic protein complex that binds to dilysine motifs and reversibly associates with Golgi non-clathrin-coated vesicles, which further mediate biosynthetic protein transport from the ER, via the Golgi up to the trans Golgi network. Coatomer complex is required for budding from Golgi membranes, and is essential for the retrograde Golgi-to-ER transport of dilysine-tagged proteins. The protein is Coatomer subunit beta'-2 of Oryza sativa subsp. japonica (Rice).